A 568-amino-acid polypeptide reads, in one-letter code: Type 2 DNA topoisomerase 6 subunit B (568 aa).

Residues Asn-46, Asp-78, 99–100, 109–116, and Lys-473 contribute to the ATP site; these read TK and GQQGIGIS.

Belongs to the TOP6B family. Homodimer. Heterotetramer of two Top6A and two Top6B chains.

The enzyme catalyses ATP-dependent breakage, passage and rejoining of double-stranded DNA.. Functionally, relaxes both positive and negative superturns and exhibits a strong decatenase activity. This chain is Type 2 DNA topoisomerase 6 subunit B, found in Pyrococcus furiosus (strain ATCC 43587 / DSM 3638 / JCM 8422 / Vc1).